The following is a 236-amino-acid chain: Small ribosomal subunit protein uS2c (236 aa).

This sequence belongs to the universal ribosomal protein uS2 family.

Its subcellular location is the plastid. The protein localises to the chloroplast. This is Small ribosomal subunit protein uS2c (rps2) from Coffea arabica (Arabian coffee).